We begin with the raw amino-acid sequence, 42 residues long: Small, acid-soluble spore protein L (42 aa).

The disordered stretch occupies residues 1–42 (MKKKDKGRLTGGVTPQGDLEGNTHNDPKTELEERAKKSNTKR). Positions 21 to 36 (GNTHNDPKTELEERAK) are enriched in basic and acidic residues.

It localises to the spore core. The protein is Small, acid-soluble spore protein L (sspL) of Bacillus subtilis (strain 168).